We begin with the raw amino-acid sequence, 507 residues long: Arabinose import ATP-binding protein AraG (507 aa).

ABC transporter domains are found at residues 14–249 (LRFN…MVGR) and 249–505 (RDIQ…LPRT). 46 to 53 (GENGAGKS) is a binding site for ATP.

This sequence belongs to the ABC transporter superfamily. Arabinose importer (TC 3.A.1.2.2) family. As to quaternary structure, the complex is composed of two ATP-binding proteins (AraG), two transmembrane proteins (AraH) and a solute-binding protein (AraF).

It is found in the cell inner membrane. It carries out the reaction L-arabinose(out) + ATP + H2O = L-arabinose(in) + ADP + phosphate + H(+). In terms of biological role, part of the ABC transporter complex AraFGH involved in arabinose import. Responsible for energy coupling to the transport system. The protein is Arabinose import ATP-binding protein AraG of Pseudomonas syringae pv. tomato (strain ATCC BAA-871 / DC3000).